The primary structure comprises 374 residues: Ferroptosis suppressor protein 1 (374 aa).

A lipid anchor (N-myristoyl glycine) is attached at G2. The chain crosses the membrane as a helical span at residues 13–35; it reads VVIVGGGFAGIAAASQLKSFGIP. 6-hydroxy-FAD contacts are provided by residues 17 to 21, R53, and V81; that span reads GGGFA. K167 carries the N6-acetyllysine modification. D285 lines the 6-hydroxy-FAD pocket.

The protein belongs to the FAD-dependent oxidoreductase family. 6-hydroxy-FAD is required as a cofactor. Post-translationally, N-myristoylation at Gly-2 mediates the recruitment to lipid droplets and plasma membrane. In terms of processing, acetylation at Lys-167 prevents AIFM2 ubiquitination and degradation, thereby inhibiting ferroptosis. KAT2B mediates acetylation at Lys-167, while HDAC3 removes it. Ubiquitinated. AIFM2 undergoes 'Lys-29'-ubiquitination and proteasomal degradation, which is inhibited by acetylation at Lys-167.

The protein localises to the lipid droplet. The protein resides in the cell membrane. It localises to the cytoplasm. Its subcellular location is the mitochondrion membrane. It is found in the nucleus. It carries out the reaction ubiquinone-10 + NADH + H(+) = ubiquinol-10 + NAD(+). The enzyme catalyses phylloquinone + NADH + H(+) = phylloquinol + NAD(+). It catalyses the reaction menaquinone-4 + NADH + H(+) = menaquinol-4 + NAD(+). The catalysed reaction is menadione + NADH + H(+) = menadiol + NAD(+). The modification by 4-hydroxy-2-nonenal (HNE) adduction in mitochondria results in loss of the oxidoreductase activity and activation of a novel function in mitochondrial oxidative stress signaling. Functionally, a NAD(P)H-dependent oxidoreductase that acts as a key inhibitor of ferroptosis. At the plasma membrane, catalyzes reduction of coenzyme Q/ubiquinone-10 to ubiquinol-10, a lipophilic radical-trapping antioxidant that prevents lipid oxidative damage and consequently ferroptosis. Acts in parallel to GPX4 to suppress phospholipid peroxidation and ferroptosis. This anti-ferroptotic function is independent of cellular glutathione levels. Also acts as a potent radical-trapping antioxidant by mediating warfarin-resistant vitamin K reduction in the canonical vitamin K cycle: catalyzes NAD(P)H-dependent reduction of vitamin K (phylloquinone, menaquinone-4 and menadione) to hydroquinone forms. Hydroquinones act as potent radical-trapping antioxidants inhibitor of phospholipid peroxidation and ferroptosis. May play a role in mitochondrial stress signaling. Upon oxidative stress, associates with the lipid peroxidation end product 4-hydroxy-2-nonenal (HNE) forming a lipid adduct devoid of oxidoreductase activity, which then translocates from mitochondria into the nucleus triggering DNA damage and cell death. This Xenopus laevis (African clawed frog) protein is Ferroptosis suppressor protein 1 (aifm2).